The primary structure comprises 127 residues: Ribonuclease P protein component 1 (127 aa).

The protein belongs to the eukaryotic/archaeal RNase P protein component 1 family. In terms of assembly, consists of a catalytic RNA component and at least 4-5 protein subunits.

It localises to the cytoplasm. The catalysed reaction is Endonucleolytic cleavage of RNA, removing 5'-extranucleotides from tRNA precursor.. Part of ribonuclease P, a protein complex that generates mature tRNA molecules by cleaving their 5'-ends. The chain is Ribonuclease P protein component 1 from Pyrococcus abyssi (strain GE5 / Orsay).